The primary structure comprises 105 residues: Large ribosomal subunit protein uL24 (105 aa).

The protein belongs to the universal ribosomal protein uL24 family. In terms of assembly, part of the 50S ribosomal subunit.

Its function is as follows. One of two assembly initiator proteins, it binds directly to the 5'-end of the 23S rRNA, where it nucleates assembly of the 50S subunit. In terms of biological role, one of the proteins that surrounds the polypeptide exit tunnel on the outside of the subunit. The sequence is that of Large ribosomal subunit protein uL24 from Anaplasma marginale (strain St. Maries).